The sequence spans 111 residues: Gastrula zinc finger protein XlCGF32.1 (111 aa).

C2H2-type zinc fingers lie at residues 6 to 28 (FDCTECGKSFKRKSKLKTHFLCH), 34 to 56 (FVCVHCGKGFRDNYKLSLHLRIH), 62 to 84 (SVCPDCGKSYTDKNKLIVHMRIH), and 89 to 111 (FMCSECGKGFSDFYNLKSHLQIH).

Belongs to the krueppel C2H2-type zinc-finger protein family.

The protein localises to the nucleus. May be involved in transcriptional regulation. The chain is Gastrula zinc finger protein XlCGF32.1 from Xenopus laevis (African clawed frog).